The following is a 260-amino-acid chain: Ribosomal RNA small subunit methyltransferase J (260 aa).

S-adenosyl-L-methionine contacts are provided by residues 125-126 (ER) and Asp-179.

It belongs to the methyltransferase superfamily. RsmJ family.

The protein resides in the cytoplasm. It carries out the reaction guanosine(1516) in 16S rRNA + S-adenosyl-L-methionine = N(2)-methylguanosine(1516) in 16S rRNA + S-adenosyl-L-homocysteine + H(+). In terms of biological role, specifically methylates the guanosine in position 1516 of 16S rRNA. This is Ribosomal RNA small subunit methyltransferase J from Pseudomonas fluorescens (strain Pf0-1).